Reading from the N-terminus, the 366-residue chain is Ribosomal RNA large subunit methyltransferase M (366 aa).

S-adenosyl-L-methionine-binding positions include Ser-188, 221-224, Asp-240, Asp-260, and Asp-277; that span reads CPGG. Lys-306 functions as the Proton acceptor in the catalytic mechanism.

It belongs to the class I-like SAM-binding methyltransferase superfamily. RNA methyltransferase RlmE family. RlmM subfamily. As to quaternary structure, monomer.

It localises to the cytoplasm. It catalyses the reaction cytidine(2498) in 23S rRNA + S-adenosyl-L-methionine = 2'-O-methylcytidine(2498) in 23S rRNA + S-adenosyl-L-homocysteine + H(+). Catalyzes the 2'-O-methylation at nucleotide C2498 in 23S rRNA. The sequence is that of Ribosomal RNA large subunit methyltransferase M from Pectobacterium atrosepticum (strain SCRI 1043 / ATCC BAA-672) (Erwinia carotovora subsp. atroseptica).